The following is a 375-amino-acid chain: Erythronate-4-phosphate dehydrogenase (375 aa).

2 residues coordinate substrate: S45 and T66. NAD(+)-binding residues include D146 and T175. R208 is a catalytic residue. D232 lines the NAD(+) pocket. The active site involves E237. H254 functions as the Proton donor in the catalytic mechanism. NAD(+) is bound at residue G257. Y258 contacts substrate.

It belongs to the D-isomer specific 2-hydroxyacid dehydrogenase family. PdxB subfamily. In terms of assembly, homodimer.

It localises to the cytoplasm. It catalyses the reaction 4-phospho-D-erythronate + NAD(+) = (R)-3-hydroxy-2-oxo-4-phosphooxybutanoate + NADH + H(+). Its pathway is cofactor biosynthesis; pyridoxine 5'-phosphate biosynthesis; pyridoxine 5'-phosphate from D-erythrose 4-phosphate: step 2/5. Its function is as follows. Catalyzes the oxidation of erythronate-4-phosphate to 3-hydroxy-2-oxo-4-phosphonooxybutanoate. The polypeptide is Erythronate-4-phosphate dehydrogenase (Edwardsiella ictaluri (strain 93-146)).